The primary structure comprises 894 residues: ABC-transporter-regulating transcription factor (894 aa).

The zn(2)-C6 fungal-type DNA-binding region spans Cys71–Cys98. Over residues Asn159–Gly174 the composition is skewed to polar residues. The tract at residues Asn159–Gly219 is disordered. Residues Ser175–His189 are compositionally biased toward low complexity. The span at Ser199–Pro210 shows a compositional bias: polar residues. The helical transmembrane segment at Cys649–Leu669 threads the bilayer. The tract at residues Ala724–Pro797 is disordered. Basic and acidic residues predominate over residues Ala736–Asp750. 2 stretches are compositionally biased toward polar residues: residues Glu751 to Arg761 and Leu771 to Thr792.

The protein localises to the nucleus. The protein resides in the membrane. Transcription factor that regulates expression of the genes related to resistance to azole compounds. In Aspergillus oryzae (strain ATCC 42149 / RIB 40) (Yellow koji mold), this protein is ABC-transporter-regulating transcription factor.